Here is a 347-residue protein sequence, read N- to C-terminus: NADH-ubiquinone oxidoreductase chain 2 (347 aa).

11 consecutive transmembrane segments (helical) span residues Pro3–Gly23, His25–Met45, Tyr59–Met79, Ile96–Pro116, Gly127–Pro147, Gly148–Gly168, Ile178–Pro198, Thr201–Ile221, Thr247–Ile267, Ile276–Leu296, and Leu325–Ile345.

It belongs to the complex I subunit 2 family. Core subunit of respiratory chain NADH dehydrogenase (Complex I) which is composed of 45 different subunits. Interacts with TMEM242.

It is found in the mitochondrion inner membrane. The enzyme catalyses a ubiquinone + NADH + 5 H(+)(in) = a ubiquinol + NAD(+) + 4 H(+)(out). Core subunit of the mitochondrial membrane respiratory chain NADH dehydrogenase (Complex I) which catalyzes electron transfer from NADH through the respiratory chain, using ubiquinone as an electron acceptor. Essential for the catalytic activity and assembly of complex I. The chain is NADH-ubiquinone oxidoreductase chain 2 from Ozimops beccarii (Beccari's free-tailed bat).